A 63-amino-acid polypeptide reads, in one-letter code: Small ribosomal subunit protein eS17 (63 aa).

The protein belongs to the eukaryotic ribosomal protein eS17 family.

The chain is Small ribosomal subunit protein eS17 from Methanococcus maripaludis (strain C7 / ATCC BAA-1331).